A 229-amino-acid polypeptide reads, in one-letter code: tRNA (guanine-N(7)-)-methyltransferase (229 aa).

Residues glutamate 62, glutamate 87, aspartate 114, and aspartate 137 each contribute to the S-adenosyl-L-methionine site. The active site involves aspartate 137. Residue lysine 141 coordinates substrate. Residues 143–148 are interaction with RNA; sequence KHNKRR. Substrate-binding positions include aspartate 173 and 208-211; that span reads TKFE.

This sequence belongs to the class I-like SAM-binding methyltransferase superfamily. TrmB family.

It catalyses the reaction guanosine(46) in tRNA + S-adenosyl-L-methionine = N(7)-methylguanosine(46) in tRNA + S-adenosyl-L-homocysteine. The protein operates within tRNA modification; N(7)-methylguanine-tRNA biosynthesis. Its function is as follows. Catalyzes the formation of N(7)-methylguanine at position 46 (m7G46) in tRNA. The protein is tRNA (guanine-N(7)-)-methyltransferase of Francisella philomiragia subsp. philomiragia (strain ATCC 25017 / CCUG 19701 / FSC 153 / O#319-036).